Here is a 445-residue protein sequence, read N- to C-terminus: Ribosomal protein uS12 methylthiotransferase RimO (445 aa).

One can recognise an MTTase N-terminal domain in the interval 4 to 119; it reads YKVGMVSLGC…INEAIMNFIN (116 aa). Cys-13, Cys-48, Cys-82, Cys-157, Cys-161, and Cys-164 together coordinate [4Fe-4S] cluster. The Radical SAM core domain maps to 143–373; the sequence is TTDKATAYLR…MLLQKEVSEE (231 aa). The TRAM domain maps to 376–441; sequence KNKVGREYDV…EYDLVGVVCN (66 aa).

The protein belongs to the methylthiotransferase family. RimO subfamily. The cofactor is [4Fe-4S] cluster.

The protein resides in the cytoplasm. The catalysed reaction is L-aspartate(89)-[ribosomal protein uS12]-hydrogen + (sulfur carrier)-SH + AH2 + 2 S-adenosyl-L-methionine = 3-methylsulfanyl-L-aspartate(89)-[ribosomal protein uS12]-hydrogen + (sulfur carrier)-H + 5'-deoxyadenosine + L-methionine + A + S-adenosyl-L-homocysteine + 2 H(+). Catalyzes the methylthiolation of an aspartic acid residue of ribosomal protein uS12. This chain is Ribosomal protein uS12 methylthiotransferase RimO, found in Clostridium perfringens (strain 13 / Type A).